Reading from the N-terminus, the 760-residue chain is BMP/retinoic acid-inducible neural-specific protein 1 (760 aa).

The first 16 residues, Met1–Gly16, serve as a signal peptide directing secretion. In terms of domain architecture, MACPF spans Arg68 to Met251. N-linked (GlcNAc...) asparagine glycosylation is found at Asn156, Asn433, Asn443, Asn553, Asn599, Asn630, and Asn676.

It belongs to the BRINP family.

It is found in the cytoplasm. Its function is as follows. Plays a role in neurogenesis and brain development. May suppress cell cycle progression in postmitotic neurons by inhibiting G1/S transition. This Rattus norvegicus (Rat) protein is BMP/retinoic acid-inducible neural-specific protein 1 (Brinp1).